A 666-amino-acid polypeptide reads, in one-letter code: MTGTPKTQEGAKDLEVDMNKTEVTPRLWTTCRDGEVLLRLSKHGPGHETPMTIPEFFRESVNRFGTYPALASKNGKKWEILNFNQYYEACRKAAKSLIKLGLERFHGVGILGFNSAEWFITAVGAILAGGLCVGIYATNSAEVCQYVITHAKVNILLVENDQQLQKILSIPQSSLEPLKAIIQYRLPMKKNNNLYSWDDFMELGRSIPDTQLEQVIESQKANQCAVLIYTSGTTGIPKGVMLSHDNITWIAGAVTKDFKLTDKHETVVSYLPLSHIAAQMMDIWVPIKIGALTYFAQADALKGTLVSTLKEVKPTVFIGVPQIWEKIHEMVKKNSAKSMGLKKKAFVWARNIGFKVNSKKMLGKYNTPVSYRMAKTLVFSKVKTSLGLDHCHSFISGTAPLNQETAEFFLSLDIPIGELYGLSESSGPHTISNQNNYRLLSCGKILTGCKNMLFQQNKDGIGEICLWGRHIFMGYLESETETTEAIDDEGWLHSGDLGQLDGLGFLYVTGHIKEILITAGGENVPPIPVETLVKKKIPIISNAMLVGDKLKFLSMLLTLKCEMNQMSGEPLDKLNFEAINFCRGLGSQASTVTEIVKQQDPLVYKAIQQGINAVNQEAMNNAQRIEKWVILEKDFSIYGGELGPMMKLKRHFVAQKYKKQIDHMYH.

ATP-binding positions include 230–238 (TSGTTGIPK), 418–423 (ELYGLS), Asp-496, and Arg-624.

It belongs to the ATP-dependent AMP-binding enzyme family. Bubblegum subfamily. As to expression, testis-specific.

It localises to the cytoplasm. Its subcellular location is the membrane. The catalysed reaction is a long-chain fatty acid + ATP + CoA = a long-chain fatty acyl-CoA + AMP + diphosphate. It catalyses the reaction (5Z,8Z,11Z,14Z)-eicosatetraenoate + ATP + CoA = (5Z,8Z,11Z,14Z)-eicosatetraenoyl-CoA + AMP + diphosphate. The enzyme catalyses hexadecanoate + ATP + CoA = hexadecanoyl-CoA + AMP + diphosphate. It carries out the reaction (9Z)-octadecenoate + ATP + CoA = (9Z)-octadecenoyl-CoA + AMP + diphosphate. The catalysed reaction is (9Z,12Z)-octadecadienoate + ATP + CoA = (9Z,12Z)-octadecadienoyl-CoA + AMP + diphosphate. It catalyses the reaction tetracosanoate + ATP + CoA = tetracosanoyl-CoA + AMP + diphosphate. Catalyzes the conversion of fatty acids such as long chain and very long-chain fatty acids to their active form acyl-CoAs for both synthesis of cellular lipids, and degradation via beta-oxidation. Can activate diverse saturated, monosaturated and polyunsaturated fatty acids. Has increased ability to activate oleic and linoleic acid. May play a role in spermatogenesis. This Homo sapiens (Human) protein is Long-chain-fatty-acid--CoA ligase ACSBG2.